The following is a 258-amino-acid chain: Ribosomal RNA small subunit methyltransferase J (258 aa).

S-adenosyl-L-methionine is bound by residues 123 to 124 and Asp-177; that span reads ER. Residues 232-258 form a disordered region; that stretch reads IDGPKPSHSLEGKSSRYDIYPKKALKA. A compositionally biased stretch (basic and acidic residues) spans 239 to 252; that stretch reads HSLEGKSSRYDIYP.

Belongs to the methyltransferase superfamily. RsmJ family.

It localises to the cytoplasm. It carries out the reaction guanosine(1516) in 16S rRNA + S-adenosyl-L-methionine = N(2)-methylguanosine(1516) in 16S rRNA + S-adenosyl-L-homocysteine + H(+). In terms of biological role, specifically methylates the guanosine in position 1516 of 16S rRNA. The sequence is that of Ribosomal RNA small subunit methyltransferase J from Pseudomonas putida (strain W619).